The chain runs to 138 residues: Transcription antitermination protein NusB (138 aa).

This sequence belongs to the NusB family.

Involved in transcription antitermination. Required for transcription of ribosomal RNA (rRNA) genes. Binds specifically to the boxA antiterminator sequence of the ribosomal RNA (rrn) operons. The polypeptide is Transcription antitermination protein NusB (Coxiella burnetii (strain CbuK_Q154) (Coxiella burnetii (strain Q154))).